The chain runs to 196 residues: Large ribosomal subunit protein uL6 (196 aa).

The protein belongs to the universal ribosomal protein uL6 family. In terms of assembly, part of the 50S ribosomal subunit.

In terms of biological role, this protein binds to the 23S rRNA, and is important in its secondary structure. It is located near the subunit interface in the base of the L7/L12 stalk, and near the tRNA binding site of the peptidyltransferase center. The sequence is that of Large ribosomal subunit protein uL6 from Pyrobaculum aerophilum (strain ATCC 51768 / DSM 7523 / JCM 9630 / CIP 104966 / NBRC 100827 / IM2).